Consider the following 129-residue polypeptide: ASNFTQFVLVNDGGTGNVTVAPSNFANGVAEWISSNSRSQAYKVTCSVRQSSAQNRKYTIKVEVPKVATQTVGGVELPVAAWRSYLNLELTIPIFATNSDCELIVKAMQGLLKDGNPIPSAIAANSGIY.

Residues 31-104 (EWISSNSRSQ…FATNSDCELI (74 aa)) form a viral RNA-binding region.

This sequence belongs to the Leviviricetes capsid protein family. As to quaternary structure, homodimer. The capsid proteins form dimers that assemble by group of 5. Twelve such pentamers are linked together with free dimers. The homodimers binds to the viral RNA via an operator hairpin, but also to many other RNA sequences in the viral genome; this interaction probably shifts the virus from the replicative to the assembly phase and ensures specific encapsidation of the viral genome.

The protein localises to the virion. Functionally, capsid protein self-assembles to form an icosahedral capsid with a T=3 symmetry, about 26 nm in diameter, and consisting of 89 capsid proteins dimers (178 capsid proteins). Involved in viral genome encapsidation through the interaction between a capsid protein dimer and the multiple packaging signals present in the RNA genome. The capsid also contains 1 copy of the A2 maturation protein. Acts as a translational repressor of viral replicase synthesis late in infection. This latter function is the result of capsid protein interaction with an RNA hairpin which contains the replicase ribosome-binding site. The polypeptide is Capsid protein (Enterobacteria phage f2 (Bacteriophage f2)).